Consider the following 261-residue polypeptide: UPF0328 protein ECU02_0020/ECU04_1700 (261 aa).

Positions 1–20 (MSITSIPQPHETNEQHHTEI) are disordered. Residues 11 to 20 (ETNEQHHTEI) are compositionally biased toward basic and acidic residues.

Belongs to the UPF0328 family.

The polypeptide is UPF0328 protein ECU02_0020/ECU04_1700 (Encephalitozoon cuniculi (strain GB-M1) (Microsporidian parasite)).